The following is a 289-amino-acid chain: Eukaryotic translation initiation factor 3 subunit G (289 aa).

The disordered stretch occupies residues 1-33 (MSRPTKADWADDEEFDDPSALPPQQITTNKDGT). The 79-residue stretch at 209–287 (ATLRVTNVSE…LILRVEFAKR (79 aa)) folds into the RRM domain.

The protein belongs to the eIF-3 subunit G family. In terms of assembly, component of the eukaryotic translation initiation factor 3 (eIF-3) complex.

It is found in the cytoplasm. Its function is as follows. RNA-binding component of the eukaryotic translation initiation factor 3 (eIF-3) complex, which is involved in protein synthesis of a specialized repertoire of mRNAs and, together with other initiation factors, stimulates binding of mRNA and methionyl-tRNAi to the 40S ribosome. The eIF-3 complex specifically targets and initiates translation of a subset of mRNAs involved in cell proliferation. This subunit can bind 18S rRNA. The chain is Eukaryotic translation initiation factor 3 subunit G (tif35) from Emericella nidulans (strain FGSC A4 / ATCC 38163 / CBS 112.46 / NRRL 194 / M139) (Aspergillus nidulans).